The primary structure comprises 160 residues: Putative UPF0479 protein YNL339W-B (160 aa).

Transmembrane regions (helical) follow at residues 39–59 (IVFC…KVLQ) and 136–156 (VPMI…ISQH).

It belongs to the UPF0479 family.

It localises to the membrane. The chain is Putative UPF0479 protein YNL339W-B from Saccharomyces cerevisiae (strain ATCC 204508 / S288c) (Baker's yeast).